The sequence spans 396 residues: Acetyl-CoA acetyltransferase (396 aa).

Cys88 acts as the Acyl-thioester intermediate in catalysis. Active-site proton acceptor residues include His352 and Cys382.

The protein belongs to the thiolase-like superfamily. Thiolase family. As to quaternary structure, homotetramer.

It catalyses the reaction 2 acetyl-CoA = acetoacetyl-CoA + CoA. It functions in the pathway biopolymer metabolism; poly-(R)-3-hydroxybutanoate biosynthesis. When expressed in E.coli with Synechocystis PhaB, PhaC and PhaE confers the ability to synthesize up to 12% (w/w) poly(3-hydroxybutyrate) (PHB) depending on the carbon source. The sequence is that of Acetyl-CoA acetyltransferase from Synechocystis sp. (strain ATCC 27184 / PCC 6803 / Kazusa).